The following is a 335-amino-acid chain: Photosystem II assembly lipoprotein Ycf48 (335 aa).

A signal peptide spans 1-23 (MSRLFSNLFNLLLIAAIGFGLSG). Cysteine 24 is lipidated: N-palmitoyl cysteine. Cysteine 24 carries the S-diacylglycerol cysteine lipid modification.

The protein belongs to the Ycf48 family. In terms of assembly, part of early PSII assembly complexes which includes D1 (psbA) and PsbI; not found in mature PSII. Binds to the lumenal side of PSII complexes. Interacts with YidC.

It localises to the cellular thylakoid membrane. A factor required for optimal assembly of photosystem II (PSII), acting in the early stages of PSII assembly. Also plays a role in replacement of photodamaged D1 (psbA). Assists YidC in synthesis of chlorophyll-binding proteins. The chain is Photosystem II assembly lipoprotein Ycf48 from Prochlorococcus marinus (strain MIT 9313).